Reading from the N-terminus, the 79-residue chain is Conotoxin LiCr173 (79 aa).

The first 20 residues, M1–S20, serve as a signal peptide directing secretion. Positions H21–R46 are excised as a propeptide. Cystine bridges form between C52–C64, C56–C73, and C63–C77. F78 carries the phenylalanine amide modification.

This sequence belongs to the conotoxin O3 superfamily. In terms of tissue distribution, expressed by the venom duct.

The protein localises to the secreted. This Conus lividus (Livid cone) protein is Conotoxin LiCr173.